The following is a 426-amino-acid chain: uncharacterized protein (426 aa).

To M.leprae L518_C2_147 and M.tuberculosis Rv1524.

This is an uncharacterized protein from Mycobacterium tuberculosis (strain CDC 1551 / Oshkosh).